Reading from the N-terminus, the 431-residue chain is Tol-Pal system protein TolB (431 aa).

A signal peptide spans 1–26 (MSLMTKLGFRALVASCLITAGSAANA). The interval 406–431 (DGSAPPQILSVQGGSVREPSWGPFMQ) is disordered.

It belongs to the TolB family. In terms of assembly, the Tol-Pal system is composed of five core proteins: the inner membrane proteins TolA, TolQ and TolR, the periplasmic protein TolB and the outer membrane protein Pal. They form a network linking the inner and outer membranes and the peptidoglycan layer.

It localises to the periplasm. In terms of biological role, part of the Tol-Pal system, which plays a role in outer membrane invagination during cell division and is important for maintaining outer membrane integrity. The chain is Tol-Pal system protein TolB from Burkholderia cenocepacia (strain HI2424).